A 152-amino-acid chain; its full sequence is Endoribonuclease YbeY (152 aa).

Zn(2+)-binding residues include histidine 117, histidine 121, and histidine 127.

Belongs to the endoribonuclease YbeY family. The cofactor is Zn(2+).

The protein localises to the cytoplasm. Functionally, single strand-specific metallo-endoribonuclease involved in late-stage 70S ribosome quality control and in maturation of the 3' terminus of the 16S rRNA. The protein is Endoribonuclease YbeY of Borreliella afzelii (strain PKo) (Borrelia afzelii).